Here is a 321-residue protein sequence, read N- to C-terminus: Lipoyl synthase (321 aa).

Cys-68, Cys-73, Cys-79, Cys-94, Cys-98, Cys-101, and Ser-308 together coordinate [4Fe-4S] cluster. A Radical SAM core domain is found at 80–297 (FNHGTATFMI…KAEAMAMGFT (218 aa)).

This sequence belongs to the radical SAM superfamily. Lipoyl synthase family. The cofactor is [4Fe-4S] cluster.

The protein localises to the cytoplasm. It carries out the reaction [[Fe-S] cluster scaffold protein carrying a second [4Fe-4S](2+) cluster] + N(6)-octanoyl-L-lysyl-[protein] + 2 oxidized [2Fe-2S]-[ferredoxin] + 2 S-adenosyl-L-methionine + 4 H(+) = [[Fe-S] cluster scaffold protein] + N(6)-[(R)-dihydrolipoyl]-L-lysyl-[protein] + 4 Fe(3+) + 2 hydrogen sulfide + 2 5'-deoxyadenosine + 2 L-methionine + 2 reduced [2Fe-2S]-[ferredoxin]. The protein operates within protein modification; protein lipoylation via endogenous pathway; protein N(6)-(lipoyl)lysine from octanoyl-[acyl-carrier-protein]: step 2/2. Functionally, catalyzes the radical-mediated insertion of two sulfur atoms into the C-6 and C-8 positions of the octanoyl moiety bound to the lipoyl domains of lipoate-dependent enzymes, thereby converting the octanoylated domains into lipoylated derivatives. The polypeptide is Lipoyl synthase (Yersinia enterocolitica serotype O:8 / biotype 1B (strain NCTC 13174 / 8081)).